A 312-amino-acid chain; its full sequence is MFKSGSGSLKRSGSISSVKSFSGDSEKGLPPISRGSVSIASQNSEPLIVPASSSSFAATSDFVPEKTKSEGNLKDKSSVITGNFGSSGPINAHTNQNADGDRLVENLLLKESSKGRGSGTSDARHTATDSRLSQEVKQSFSEENAGGNDLNTGRGSHGTGDGVEQHYKFDCEEGMSAYHKRVVDTFFKYFEYSAEDGHSTLYSDVMFLSGHGDLGLLVMSRYQELMTLRVRSAIYGIFCYLQALTAYLTYFDAKVGQAIMLDEELEKYEIRLDVAQDDDPIVFQITTGVFTSGVAHDLRKLTQILEAFSLER.

Positions 1-23 (MFKSGSGSLKRSGSISSVKSFSG) are enriched in low complexity. Disordered stretches follow at residues 1–37 (MFKS…RGSV), 62–99 (FVPE…QNAD), and 111–161 (ESSK…GTGD). Positions 63-77 (VPEKTKSEGNLKDKS) are enriched in basic and acidic residues. Residues 78 to 98 (SVITGNFGSSGPINAHTNQNA) are compositionally biased toward polar residues. Positions 122–134 (DARHTATDSRLSQ) are enriched in basic and acidic residues.

This sequence belongs to the phytoreovirus non-structural protein Pns12A family.

The protein resides in the host cytoplasm. Constituent of viral factories. Binds to ssRNA and dsRNA. The protein is Non-structural protein 12A of Alopecurus aequalis (Barnyard grass).